The chain runs to 302 residues: tRNA-cytidine(32) 2-sulfurtransferase (302 aa).

The PP-loop motif motif lies at 45–50; it reads SGGKDS. 3 residues coordinate [4Fe-4S] cluster: Cys-120, Cys-123, and Cys-211.

Belongs to the TtcA family. As to quaternary structure, homodimer. It depends on Mg(2+) as a cofactor. Requires [4Fe-4S] cluster as cofactor.

The protein localises to the cytoplasm. The catalysed reaction is cytidine(32) in tRNA + S-sulfanyl-L-cysteinyl-[cysteine desulfurase] + AH2 + ATP = 2-thiocytidine(32) in tRNA + L-cysteinyl-[cysteine desulfurase] + A + AMP + diphosphate + H(+). It participates in tRNA modification. Functionally, catalyzes the ATP-dependent 2-thiolation of cytidine in position 32 of tRNA, to form 2-thiocytidine (s(2)C32). The sulfur atoms are provided by the cysteine/cysteine desulfurase (IscS) system. This chain is tRNA-cytidine(32) 2-sulfurtransferase, found in Cellvibrio japonicus (strain Ueda107) (Pseudomonas fluorescens subsp. cellulosa).